The sequence spans 100 residues: UPF0235 protein NE0395 (100 aa).

Belongs to the UPF0235 family.

The sequence is that of UPF0235 protein NE0395 from Nitrosomonas europaea (strain ATCC 19718 / CIP 103999 / KCTC 2705 / NBRC 14298).